Reading from the N-terminus, the 120-residue chain is Basic phospholipase A2 homolog piratoxin-3 (120 aa).

Disulfide bonds link Cys26–Cys113, Cys28–Cys44, Cys43–Cys94, Cys49–Cys120, Cys50–Cys87, Cys57–Cys81, and Cys75–Cys85. The segment at 104 to 115 (KKYRYHLKPCKK) is important for membrane-damaging activities in eukaryotes and bacteria; heparin-binding.

The protein belongs to the phospholipase A2 family. Group II subfamily. D49 sub-subfamily. As to quaternary structure, homodimer; non-covalently linked (probable alternative/compact dimer conformation). Expressed by the venom gland.

The protein localises to the secreted. Functionally, snake venom phospholipase A2 (PLA2) that lacks enzymatic activity. Shows high myotoxin activities. Also has anticoagulant activity. A model of myotoxic mechanism has been proposed: an apo Lys49-PLA2 is activated by the entrance of a hydrophobic molecule (e.g. fatty acid) at the hydrophobic channel of the protein leading to a reorientation of a monomer. This reorientation causes a transition between 'inactive' to 'active' states, causing alignment of C-terminal and membrane-docking sites (MDoS) side-by-side and putting the membrane-disruption sites (MDiS) in the same plane, exposed to solvent and in a symmetric position for both monomers. The MDoS region stabilizes the toxin on membrane by the interaction of charged residues with phospholipid head groups. Subsequently, the MDiS region destabilizes the membrane with penetration of hydrophobic residues. This insertion causes a disorganization of the membrane, allowing an uncontrolled influx of ions (i.e. calcium and sodium), and eventually triggering irreversible intracellular alterations and cell death. This chain is Basic phospholipase A2 homolog piratoxin-3, found in Bothrops pirajai (Piraja's lancehead).